A 154-amino-acid chain; its full sequence is Protein Smg homolog (154 aa).

This sequence belongs to the Smg family.

In Aromatoleum aromaticum (strain DSM 19018 / LMG 30748 / EbN1) (Azoarcus sp. (strain EbN1)), this protein is Protein Smg homolog.